The following is a 237-amino-acid chain: Protein FEV (237 aa).

Positions 47 to 127 form a DNA-binding region, ETS; that stretch reads IQLWQFLLEL…HGKRYAYRFD (81 aa). The segment at 129–237 is may mediate active transcriptional repression; the sequence is QGLAQACQPP…AASHLGGHYH (109 aa).

This sequence belongs to the ETS family. As to expression, expressed in central serotonergic neurons.

The protein resides in the nucleus. In terms of biological role, functions as a transcriptional regulator. May function as a transcriptional repressor. Functions in the differentiation and the maintenance of the central serotonergic neurons. May play a role in cell growth. The polypeptide is Protein FEV (Fev) (Mus musculus (Mouse)).